Reading from the N-terminus, the 210-residue chain is 3-oxo-tetronate 4-phosphate decarboxylase (210 aa).

The active-site Proton acceptor is Glu-74. Residues Glu-74, His-93, and His-95 each coordinate Zn(2+). Tyr-120 (proton donor) is an active-site residue. His-160 provides a ligand contact to Zn(2+).

The protein belongs to the aldolase class II family. AraD/FucA subfamily. It depends on Zn(2+) as a cofactor.

It carries out the reaction 3-dehydro-4-O-phospho-D-erythronate + H(+) = dihydroxyacetone phosphate + CO2. It catalyses the reaction 3-dehydro-4-O-phospho-L-erythronate + H(+) = dihydroxyacetone phosphate + CO2. Functionally, catalyzes the decarboxylation of 3-oxo-tetronate 4-phosphate to dihydroxyacetone phosphate (DHAP) and CO(2). The sequence is that of 3-oxo-tetronate 4-phosphate decarboxylase from Haemophilus influenzae (strain ATCC 51907 / DSM 11121 / KW20 / Rd).